A 326-amino-acid chain; its full sequence is 3-isopropylmalate dehydrogenase (326 aa).

Residues arginine 81, arginine 91, arginine 112, and aspartate 198 each coordinate substrate. Mg(2+) is bound by residues aspartate 198, aspartate 222, and aspartate 226. 255 to 267 contributes to the NAD(+) binding site; sequence GAAFDIAGKGIAN.

Belongs to the isocitrate and isopropylmalate dehydrogenases family. In terms of assembly, homotetramer. It depends on Mg(2+) as a cofactor. Requires Mn(2+) as cofactor.

It localises to the cytoplasm. It carries out the reaction (2R,3S)-3-isopropylmalate + NAD(+) = 4-methyl-2-oxopentanoate + CO2 + NADH. It participates in amino-acid biosynthesis; L-leucine biosynthesis; L-leucine from 3-methyl-2-oxobutanoate: step 3/4. In terms of biological role, catalyzes the oxidation of 3-carboxy-2-hydroxy-4-methylpentanoate (3-isopropylmalate) to 3-carboxy-4-methyl-2-oxopentanoate. The product decarboxylates to 4-methyl-2 oxopentanoate. The sequence is that of 3-isopropylmalate dehydrogenase (leuB) from Archaeoglobus fulgidus (strain ATCC 49558 / DSM 4304 / JCM 9628 / NBRC 100126 / VC-16).